Here is a 500-residue protein sequence, read N- to C-terminus: Galactofuranose transporter ATP-binding protein YtfR (500 aa).

ABC transporter domains follow at residues 10–245 (LRTE…LGRE) and 259–497 (LSDK…IMNA). 42–49 (GENGAGKS) is a binding site for ATP.

It belongs to the ABC transporter superfamily. As to quaternary structure, the complex is composed of two ATP-binding proteins (YtfR), two transmembrane proteins (YtfT and YjfF) and a solute-binding protein (YtfQ).

It is found in the cell inner membrane. It catalyses the reaction D-galactofuranose(out) + ATP + H2O = D-galactofuranose(in) + ADP + phosphate + H(+). Its function is as follows. Part of the ABC transporter complex YtfQRT-YjfF involved in galactofuranose transport. Responsible for energy coupling to the transport system. In Escherichia coli O157:H7, this protein is Galactofuranose transporter ATP-binding protein YtfR (ytfR).